A 200-amino-acid polypeptide reads, in one-letter code: Late embryogenesis abundant protein 19 (200 aa).

Disordered regions lie at residues 1-158 and 172-200; these read MASH…KSTV and TEDK…ARDH. Composition is skewed to basic and acidic residues over residues 13 to 23, 30 to 42, 53 to 81, 88 to 97, and 105 to 114; these read GETKAHTEEKA, SKDK…DRAS, QDTK…KDKT, ARDKAAESKD, and EKTEQAKQKA. Residues 52–81 adopt a coiled-coil conformation; it reads GQDTKEATKEKAQAAKERASETAQAAKDKT. The segment covering 115–130 has biased composition (low complexity); it reads AETAGAAKQKTAETAQ. The segment covering 145-156 has biased composition (polar residues); the sequence is SVLQQASEQVKS. Positions 172-183 are enriched in basic and acidic residues; that stretch reads TEDKAGTDDGAN. Residues 186–200 are compositionally biased toward low complexity; the sequence is TSATAAATETTARDH.

This sequence belongs to the LEA type 4 family. As to expression, expressed in the shoot apex and leaves.

Functionally, involved in response to drought stress. The polypeptide is Late embryogenesis abundant protein 19 (Oryza sativa subsp. indica (Rice)).